The sequence spans 139 residues: MLGGDTPYDFAEKKYITRMNKDEINYLMTPVPKAVYKNRKSPIDLPFFNGKKQDAYGHLLDNVEKPIYKSGGQNVYANSWNGRTYGKKPAKAQPTDRLICEFCGKTYTRSNRSTHRKTEVCKAYQSMNKKLKDVLLRTD.

This is an uncharacterized protein from Sputnik virophage.